The following is a 686-amino-acid chain: tRNA wybutosine-synthesizing protein 4 (686 aa).

A compositionally biased stretch (basic and acidic residues) spans 1–10; that stretch reads MGPRSRERRA. The tract at residues 1-21 is disordered; that stretch reads MGPRSRERRAGAVQNTNDSSA. S-adenosyl-L-methionine contacts are provided by residues arginine 59, glycine 89, aspartate 114, 161–162, and glutamate 188; that span reads DL.

It belongs to the methyltransferase superfamily. LCMT family. Interacts with RNF144B/IBRDC2.

The enzyme catalyses 7-[(3S)-3-amino-3-carboxypropyl]wyosine(37) in tRNA(Phe) + S-adenosyl-L-methionine = 7-[(3S)-(3-amino-3-methoxycarbonyl)propyl]wyosine(37) in tRNA(Phe) + S-adenosyl-L-homocysteine. It catalyses the reaction 7-[(3S)-(3-amino-3-methoxycarbonyl)propyl]wyosine(37) in tRNA(Phe) + S-adenosyl-L-methionine + CO2 = wybutosine(37) in tRNA(Phe) + S-adenosyl-L-homocysteine + 2 H(+). It functions in the pathway tRNA modification; wybutosine-tRNA(Phe) biosynthesis. Functionally, probable S-adenosyl-L-methionine-dependent methyltransferase that acts as a component of the wybutosine biosynthesis pathway. Wybutosine is a hyper modified guanosine with a tricyclic base found at the 3'-position adjacent to the anticodon of eukaryotic phenylalanine tRNA. May methylate the carboxyl group of leucine residues to form alpha-leucine ester residues. This chain is tRNA wybutosine-synthesizing protein 4 (LCMT2), found in Homo sapiens (Human).